Here is a 204-residue protein sequence, read N- to C-terminus: UPF0637 protein Lm4b_01081 (204 aa).

This sequence belongs to the UPF0637 family.

In Listeria monocytogenes serotype 4b (strain CLIP80459), this protein is UPF0637 protein Lm4b_01081.